We begin with the raw amino-acid sequence, 540 residues long: Putative cysteine ligase BshC (540 aa).

A coiled-coil region spans residues 425 to 453; sequence IEKVEGMIEQQRRLNKDLLDEVAGNQNNI.

It belongs to the BshC family.

Functionally, involved in bacillithiol (BSH) biosynthesis. May catalyze the last step of the pathway, the addition of cysteine to glucosamine malate (GlcN-Mal) to generate BSH. The sequence is that of Putative cysteine ligase BshC from Staphylococcus aureus (strain NCTC 8325 / PS 47).